We begin with the raw amino-acid sequence, 434 residues long: Serine hydroxymethyltransferase (434 aa).

(6S)-5,6,7,8-tetrahydrofolate is bound by residues Leu-133 and 137–139; that span reads GHL. Lys-242 is subject to N6-(pyridoxal phosphate)lysine.

Belongs to the SHMT family. Homodimer. It depends on pyridoxal 5'-phosphate as a cofactor.

Its subcellular location is the cytoplasm. The catalysed reaction is (6R)-5,10-methylene-5,6,7,8-tetrahydrofolate + glycine + H2O = (6S)-5,6,7,8-tetrahydrofolate + L-serine. It participates in one-carbon metabolism; tetrahydrofolate interconversion. It functions in the pathway amino-acid biosynthesis; glycine biosynthesis; glycine from L-serine: step 1/1. Functionally, catalyzes the reversible interconversion of serine and glycine with tetrahydrofolate (THF) serving as the one-carbon carrier. This reaction serves as the major source of one-carbon groups required for the biosynthesis of purines, thymidylate, methionine, and other important biomolecules. Also exhibits THF-independent aldolase activity toward beta-hydroxyamino acids, producing glycine and aldehydes, via a retro-aldol mechanism. The polypeptide is Serine hydroxymethyltransferase (Methylobacterium radiotolerans (strain ATCC 27329 / DSM 1819 / JCM 2831 / NBRC 15690 / NCIMB 10815 / 0-1)).